The sequence spans 200 residues: Adenylate kinase (200 aa).

10-15 (GAGKGT) lines the ATP pocket. An NMP region spans residues 30–59 (STGDLFRANISQQTELGKLAKSYMDAGNLV). AMP contacts are provided by residues T31, R36, 57-59 (NLV), 84-87 (GFPR), and Q91. The interval 125–163 (GRRVCRNDSAHVFHVTYTPPKKEGVCDVCGGELYQRDDD) is LID. Residues R126 and 136-137 (VF) each bind ATP. AMP contacts are provided by R160 and R171.

This sequence belongs to the adenylate kinase family. Monomer.

It localises to the cytoplasm. The enzyme catalyses AMP + ATP = 2 ADP. The protein operates within purine metabolism; AMP biosynthesis via salvage pathway; AMP from ADP: step 1/1. Functionally, catalyzes the reversible transfer of the terminal phosphate group between ATP and AMP. Plays an important role in cellular energy homeostasis and in adenine nucleotide metabolism. This chain is Adenylate kinase, found in Streptomyces lividans.